The chain runs to 215 residues: Probable transaldolase 1 (215 aa).

The active-site Schiff-base intermediate with substrate is lysine 83.

It belongs to the transaldolase family. Type 3B subfamily.

The protein localises to the cytoplasm. It catalyses the reaction D-sedoheptulose 7-phosphate + D-glyceraldehyde 3-phosphate = D-erythrose 4-phosphate + beta-D-fructose 6-phosphate. It functions in the pathway carbohydrate degradation; pentose phosphate pathway; D-glyceraldehyde 3-phosphate and beta-D-fructose 6-phosphate from D-ribose 5-phosphate and D-xylulose 5-phosphate (non-oxidative stage): step 2/3. Its function is as follows. Transaldolase is important for the balance of metabolites in the pentose-phosphate pathway. This chain is Probable transaldolase 1, found in Bacillus cereus (strain ATCC 14579 / DSM 31 / CCUG 7414 / JCM 2152 / NBRC 15305 / NCIMB 9373 / NCTC 2599 / NRRL B-3711).